A 261-amino-acid chain; its full sequence is Probable RNA-binding protein ARP1 (261 aa).

The RRM domain occupies 17–94 (TKVFVGGLAW…RRANCNLASL (78 aa)). The interval 96 to 122 (GRLRKSPTMTSPQQGPKNGNRATPPHV) is disordered. A compositionally biased stretch (polar residues) spans 102 to 116 (PTMTSPQQGPKNGNR).

Expressed in vasculature of leaves, roots and siliques.

It is found in the nucleus. Functionally, probable RNA-binding protein involved in the regulation of abscisic acid (ABA) response during seed germination. May regulate transcript levels of several germination-responsive genes under ABA. This chain is Probable RNA-binding protein ARP1, found in Arabidopsis thaliana (Mouse-ear cress).